The chain runs to 138 residues: Transcription antitermination protein NusB (138 aa).

It belongs to the NusB family.

Its function is as follows. Involved in transcription antitermination. Required for transcription of ribosomal RNA (rRNA) genes. Binds specifically to the boxA antiterminator sequence of the ribosomal RNA (rrn) operons. The chain is Transcription antitermination protein NusB from Yersinia pseudotuberculosis serotype O:1b (strain IP 31758).